Reading from the N-terminus, the 536-residue chain is Lysosomal acid glucosylceramidase (536 aa).

An N-terminal signal peptide occupies residues Met-1–Gly-39. 2 disulfides stabilise this stretch: Cys-43–Cys-55 and Cys-57–Cys-62. Residues Asn-58, Asn-98, and Asn-185 are each glycosylated (N-linked (GlcNAc...) asparagine). The Proton donor role is filled by Glu-274. The N-linked (GlcNAc...) asparagine glycan is linked to Asn-309. Residue Glu-379 is the Nucleophile of the active site. Asn-501 carries an N-linked (GlcNAc...) asparagine glycan.

It belongs to the glycosyl hydrolase 30 family. In terms of assembly, interacts with saposin-C. Interacts with SCARB2. Interacts with TCP1. May interacts with SNCA; this interaction may inhibit the glucosylceramidase activity. Interacts with GRN; this interaction prevents aggregation of GBA1-SCARB2 complex via interaction with HSPA1A upon stress.

The protein localises to the lysosome membrane. The catalysed reaction is a beta-D-glucosyl-(1&lt;-&gt;1')-N-acylsphing-4-enine + H2O = an N-acylsphing-4-enine + D-glucose. It carries out the reaction a beta-D-galactosyl-(1&lt;-&gt;1')-N-acylsphing-4-enine + H2O = an N-acylsphing-4-enine + D-galactose. The enzyme catalyses cholesteryl 3-beta-D-glucoside + H2O = cholesterol + D-glucose. It catalyses the reaction a beta-D-glucosyl-(1&lt;-&gt;1')-N-acylsphing-4-enine + cholesterol = cholesteryl 3-beta-D-glucoside + an N-acylsphing-4-enine. The catalysed reaction is beta-D-glucosyl-N-(9Z-octadecenoyl)-sphing-4E-enine + cholesterol = N-(9Z-octadecenoyl)-sphing-4-enine + cholesteryl 3-beta-D-glucoside. It carries out the reaction beta-D-glucosyl-(1&lt;-&gt;1')-N-hexadecanoylsphing-4-enine + cholesterol = cholesteryl 3-beta-D-glucoside + N-hexadecanoylsphing-4-enine. The enzyme catalyses beta-D-glucosyl-N-octanoylsphing-4E-enine + cholesterol = N-octanoylsphing-4-enine + cholesteryl 3-beta-D-glucoside. It catalyses the reaction beta-D-glucosyl-N-dodecanoylsphing-4-enine + cholesterol = N-dodecanoylsphing-4-enine + cholesteryl 3-beta-D-glucoside. The catalysed reaction is beta-D-glucosyl-(1&lt;-&gt;1)-N-octadecanoylsphing-4-enine + cholesterol = N-octadecanoylsphing-4-enine + cholesteryl 3-beta-D-glucoside. It carries out the reaction beta-D-glucosyl-(1&lt;-&gt;1')-N-(15Z-tetracosenoyl)-sphing-4-enine + cholesterol = N-(15Z-tetracosenoyl)-sphing-4-enine + cholesteryl 3-beta-D-glucoside. The enzyme catalyses a beta-D-galactosyl-(1&lt;-&gt;1')-N-acylsphing-4-enine + cholesterol = cholesteryl 3-beta-D-galactoside + an N-acylsphing-4-enine. It catalyses the reaction 1-(beta-D-galactosyl)-N-dodecanoylsphing-4-enine + cholesterol = cholesteryl 3-beta-D-galactoside + N-dodecanoylsphing-4-enine. The catalysed reaction is a beta-D-xylosyl-(1&lt;-&gt;1')-N-acylsphing-4-enine + cholesterol = cholesteryl 3-beta-D-xyloside + an N-acylsphing-4-enine. It carries out the reaction beta-D-xylosyl-(1&lt;-&gt;1')-N-(9Z-octadecenoyl)-sphing-4-enine + cholesterol = cholesteryl 3-beta-D-xyloside + N-(9Z-octadecenoyl)-sphing-4-enine. The protein operates within steroid metabolism; cholesterol metabolism. It functions in the pathway sphingolipid metabolism. Synergistically activated by saposin-A and saposin-C, two saposin peptides produced by proteolytic processing of prosaposin/PSAP. Saposin-C activates GBA1 through its recruitment to membranes. The membrane structure and composition in anionic phospholipids are also important for the activation. Activated by PKC in the salvage pathway of ceramide formation. Inhibited by conduritol B epoxide/CBE. Glucosylceramidase that catalyzes, within the lysosomal compartment, the hydrolysis of glucosylceramides/GlcCers (such as beta-D-glucosyl-(1&lt;-&gt;1')-N-acylsphing-4-enine) into free ceramides (such as N-acylsphing-4-enine) and glucose. Plays a central role in the degradation of complex lipids and the turnover of cellular membranes. Through the production of ceramides, participates in the PKC-activated salvage pathway of ceramide formation. Catalyzes the glucosylation of cholesterol, through a transglucosylation reaction where glucose is transferred from GlcCer to cholesterol. GlcCer containing mono-unsaturated fatty acids (such as beta-D-glucosyl-N-(9Z-octadecenoyl)-sphing-4-enine) are preferred as glucose donors for cholesterol glucosylation when compared with GlcCer containing same chain length of saturated fatty acids (such as beta-D-glucosyl-N-octadecanoyl-sphing-4-enine). Under specific conditions, may alternatively catalyze the reverse reaction, transferring glucose from cholesteryl 3-beta-D-glucoside to ceramide. Can also hydrolyze cholesteryl 3-beta-D-glucoside producing glucose and cholesterol. Catalyzes the hydrolysis of galactosylceramides/GalCers (such as beta-D-galactosyl-(1&lt;-&gt;1')-N-acylsphing-4-enine), as well as the transfer of galactose between GalCers and cholesterol in vitro, but with lower activity than with GlcCers. Contrary to GlcCer and GalCer, xylosylceramide/XylCer (such as beta-D-xyosyl-(1&lt;-&gt;1')-N-acylsphing-4-enine) is not a good substrate for hydrolysis, however it is a good xylose donor for transxylosylation activity to form cholesteryl 3-beta-D-xyloside. The sequence is that of Lysosomal acid glucosylceramidase from Homo sapiens (Human).